The primary structure comprises 224 residues: uncharacterized protein (224 aa).

Residues 1–23 (MKKLLAAGIIGLLTVSIASPSFA) form the signal peptide. The VWFA domain maps to 31–224 (NVAVLFDGSG…WEKEAQKFTE (194 aa)).

This sequence to B.subtilis YwmC.

This is an uncharacterized protein from Bacillus subtilis (strain 168).